A 226-amino-acid chain; its full sequence is Uridylate kinase (226 aa).

6–10 (KISGK) provides a ligand contact to ATP. Residue Gly43 coordinates UMP. The ATP site is built by Gly44 and Arg48. UMP-binding positions include Asp65 and 113–119 (FQPGQST). The ATP site is built by Thr139, Asn140, Tyr145, and Asp148.

It belongs to the UMP kinase family. In terms of assembly, homohexamer.

It is found in the cytoplasm. The catalysed reaction is UMP + ATP = UDP + ADP. The protein operates within pyrimidine metabolism; CTP biosynthesis via de novo pathway; UDP from UMP (UMPK route): step 1/1. With respect to regulation, inhibited by UTP. Functionally, catalyzes the reversible phosphorylation of UMP to UDP. In Saccharolobus islandicus (strain Y.N.15.51 / Yellowstone #2) (Sulfolobus islandicus), this protein is Uridylate kinase.